Consider the following 35-residue polypeptide: Photosystem II reaction center protein M (35 aa).

The residue at position 1 (Met-1) is an N-formylmethionine. Residues 7-28 (GFIASILFVLVPTVFLLILFIQ) traverse the membrane as a helical segment.

Belongs to the PsbM family. As to quaternary structure, PSII is composed of 1 copy each of membrane proteins PsbA, PsbB, PsbC, PsbD, PsbE, PsbF, PsbH, PsbI, PsbJ, PsbK, PsbL, PsbM, PsbT, PsbX, PsbY, PsbZ, Psb30/Ycf12, peripheral proteins PsbO, CyanoQ (PsbQ), PsbU, PsbV and a large number of cofactors. It forms dimeric complexes.

The protein resides in the cellular thylakoid membrane. In terms of biological role, one of the components of the core complex of photosystem II (PSII). PSII is a light-driven water:plastoquinone oxidoreductase that uses light energy to abstract electrons from H(2)O, generating O(2) and a proton gradient subsequently used for ATP formation. It consists of a core antenna complex that captures photons, and an electron transfer chain that converts photonic excitation into a charge separation. This subunit is found at the monomer-monomer interface. Involved in assembly of monomeric PSII from the CP43-less intermediate. In Synechocystis sp. (strain ATCC 27184 / PCC 6803 / Kazusa), this protein is Photosystem II reaction center protein M.